Consider the following 383-residue polypeptide: Oxysterol-binding protein-related protein 4B (383 aa).

The protein belongs to the OSBP family. As to expression, expressed in stems and flowers.

May be involved in the transport of sterols. This Arabidopsis thaliana (Mouse-ear cress) protein is Oxysterol-binding protein-related protein 4B (ORP4B).